We begin with the raw amino-acid sequence, 334 residues long: Glycerol-3-phosphate dehydrogenase [NAD(P)+] (334 aa).

NADPH-binding residues include Ser-10, Trp-11, His-31, Arg-32, and Lys-105. 3 residues coordinate sn-glycerol 3-phosphate: Lys-105, Gly-136, and Ser-138. Ala-140 serves as a coordination point for NADPH. Residues Lys-191, Asp-244, Ser-254, Arg-255, and Asn-256 each contribute to the sn-glycerol 3-phosphate site. Lys-191 (proton acceptor) is an active-site residue. Arg-255 contributes to the NADPH binding site. Val-279 and Glu-281 together coordinate NADPH.

This sequence belongs to the NAD-dependent glycerol-3-phosphate dehydrogenase family.

The protein localises to the cytoplasm. The catalysed reaction is sn-glycerol 3-phosphate + NAD(+) = dihydroxyacetone phosphate + NADH + H(+). It carries out the reaction sn-glycerol 3-phosphate + NADP(+) = dihydroxyacetone phosphate + NADPH + H(+). It functions in the pathway membrane lipid metabolism; glycerophospholipid metabolism. Its function is as follows. Catalyzes the reduction of the glycolytic intermediate dihydroxyacetone phosphate (DHAP) to sn-glycerol 3-phosphate (G3P), the key precursor for phospholipid synthesis. This Chlorobium phaeobacteroides (strain BS1) protein is Glycerol-3-phosphate dehydrogenase [NAD(P)+].